The sequence spans 133 residues: Small ribosomal subunit protein uS8 (133 aa).

The protein belongs to the universal ribosomal protein uS8 family. As to quaternary structure, part of the 30S ribosomal subunit. Contacts proteins S5 and S12.

Functionally, one of the primary rRNA binding proteins, it binds directly to 16S rRNA central domain where it helps coordinate assembly of the platform of the 30S subunit. The polypeptide is Small ribosomal subunit protein uS8 (Chlamydia trachomatis serovar L2b (strain UCH-1/proctitis)).